The following is a 272-amino-acid chain: Type III pantothenate kinase (272 aa).

Asp-6 to Val-13 contacts ATP. Residue Gly-109 to Arg-112 coordinates substrate. The Proton acceptor role is filled by Asp-111. Asp-131 is a K(+) binding site. Residue Ser-134 coordinates ATP. Position 186 (Thr-186) interacts with substrate.

This sequence belongs to the type III pantothenate kinase family. Homodimer. Requires NH4(+) as cofactor. It depends on K(+) as a cofactor.

It localises to the cytoplasm. The catalysed reaction is (R)-pantothenate + ATP = (R)-4'-phosphopantothenate + ADP + H(+). It participates in cofactor biosynthesis; coenzyme A biosynthesis; CoA from (R)-pantothenate: step 1/5. Catalyzes the phosphorylation of pantothenate (Pan), the first step in CoA biosynthesis. The sequence is that of Type III pantothenate kinase from Mycobacterium marinum (strain ATCC BAA-535 / M).